Consider the following 489-residue polypeptide: Membrane-bound acylglycerophosphatidylinositol O-acyltransferase frj (489 aa).

3 helical membrane-spanning segments follow: residues 2–22, 40–60, and 75–95; these read SIDD…GSYV, VLVV…SLAL, and LVTF…DFYF. Residues N331 and H364 contribute to the active site. The next 2 helical transmembrane spans lie at 405–425 and 433–453; these read VIFW…FLLS and FYSS…ALGF.

The protein belongs to the membrane-bound acyltransferase family.

Its subcellular location is the membrane. It catalyses the reaction a 1-acyl-sn-glycero-3-phospho-(1D-myo-inositol) + (5Z,8Z,11Z,14Z)-eicosatetraenoyl-CoA = a 1-acyl-2-(5Z,8Z,11Z,14Z-eicosatetraenoyl)-sn-glycero-3-phospho-(1D-myo-inositol) + CoA. The enzyme catalyses a 1-acyl-sn-glycero-3-phosphocholine + an acyl-CoA = a 1,2-diacyl-sn-glycero-3-phosphocholine + CoA. It carries out the reaction (9Z)-hexadecenoyl-CoA + 1-hexadecanoyl-sn-glycero-3-phosphocholine = 1-hexadecanoyl-2-(9Z-hexadecenoyl)-sn-glycero-3-phosphocholine + CoA. The catalysed reaction is a 1-acyl-sn-glycero-3-phospho-L-serine + an acyl-CoA = a 1,2-diacyl-sn-glycero-3-phospho-L-serine + CoA. It catalyses the reaction 1-(9Z-octadecenoyl)-sn-glycero-3-phospho-L-serine + (9Z)-hexadecenoyl-CoA = 1-(9Z-octadecenoyl)-2-(9Z-hexadecenoyl)-sn-glycero-3-phospho-L-serine + CoA. The enzyme catalyses a 1-acyl-sn-glycero-3-phosphoethanolamine + an acyl-CoA = a 1,2-diacyl-sn-glycero-3-phosphoethanolamine + CoA. It carries out the reaction 1-hexadecanoyl-sn-glycero-3-phosphoethanolamine + (9Z)-hexadecenoyl-CoA = 1-hexadecanoyl-2-(9Z)-hexadecenoyl-sn-glycero-3-phosphoethanolamine + CoA. It functions in the pathway lipid metabolism; phospholipid metabolism. Functionally, acyltransferase that mediates the acylation of lysophospholipids to produce phospholipids (glycerophospholipids). Highest activity with lysophosphatidylinositol (1-acyl-sn-glycero-3-phospho-(1D-myo-inositol) or LPI) producing phosphatidylinositol (1,2-diacyl-sn-glycero-3-phospho-(1D-myo-inositol) or PI) (LPIAT activity), but also converts lysophosphatidylcholine (1-acyl-sn-glycero-3-phosphocholine or LPC) to phosphatidylcholine (1,2-diacyl-sn-glycero-3-phosphocholine or PC) (LPCAT activity), lysophosphatidylserine (1-acyl-2-hydroxy-sn-glycero-3-phospho-L-serine or LPS) to phosphatidylserine (1,2-diacyl-sn-glycero-3-phospho-L-serine or PS) (LPSAT activity), and lysophosphatidylethanolamine (1-acyl-sn-glycero-3-phosphoethanolamine or LPE) producing phosphatidylethanolamine (1,2-diacyl-sn-glycero-3-phosphoethanolamine or PE) (LPEAT activity). Has a preference for unsaturated fatty acid arachidonoyl-CoA ((5Z,8Z,11Z,14Z)-eicosatetraenoyl-CoA). Glycerophospholipids are important structural and functional components of cellular membrane, acyl-chain remodeling regulates the molecular species distribution of glycerophospholipids which can affect membrane fluidity and curvature. This is Membrane-bound acylglycerophosphatidylinositol O-acyltransferase frj from Drosophila melanogaster (Fruit fly).